The sequence spans 75 residues: Probable protein BRICK1-A (75 aa).

Residues 41–72 (MSCRSRLATLNEKLTALERRIEYIEARVTKGE) are a coiled coil.

This sequence belongs to the BRK1 family.

It is found in the cytoplasm. It localises to the cytoskeleton. Functionally, involved in regulation of actin and microtubule organization. Part of a WAVE complex that activates the Arp2/3 complex. This is Probable protein BRICK1-A (brk1-a) from Xenopus laevis (African clawed frog).